Here is a 710-residue protein sequence, read N- to C-terminus: Polyribonucleotide nucleotidyltransferase (710 aa).

Asp-489 and Asp-495 together coordinate Mg(2+). In terms of domain architecture, KH spans 556-615 (PKIDTIKIDVDKIKVVIGKGGETIDKIIAETGVKIDIDDEGNVSIYSSDQAAIDRTKEII). The S1 motif domain maps to 625-693 (GEVYHAKVVR…EKGRVDASMK (69 aa)). The interval 691–710 (SMKALIPRPPKPEKKEEKHD) is disordered. The segment covering 700 to 710 (PKPEKKEEKHD) has biased composition (basic and acidic residues).

This sequence belongs to the polyribonucleotide nucleotidyltransferase family. Requires Mg(2+) as cofactor.

Its subcellular location is the cytoplasm. It carries out the reaction RNA(n+1) + phosphate = RNA(n) + a ribonucleoside 5'-diphosphate. Its function is as follows. Involved in mRNA degradation. Catalyzes the phosphorolysis of single-stranded polyribonucleotides processively in the 3'- to 5'-direction. This Streptococcus pyogenes serotype M49 (strain NZ131) protein is Polyribonucleotide nucleotidyltransferase.